Reading from the N-terminus, the 420-residue chain is 2',3'-cyclic-nucleotide 3'-phosphodiesterase (420 aa).

Ser-9 carries the post-translational modification Phosphoserine. The residue at position 110 (Tyr-110) is a Phosphotyrosine. 3 positions are modified to phosphoserine: Ser-169, Ser-227, and Ser-239. Catalysis depends on His-250, which acts as the Proton acceptor. Thr-252 serves as a coordination point for substrate. His-329 (proton donor) is an active-site residue. Thr-331 serves as a coordination point for substrate. Ser-358 bears the Phosphoserine mark. Cys-417 bears the Cysteine methyl ester mark. The S-farnesyl cysteine moiety is linked to residue Cys-417. Residues 418–420 constitute a propeptide, removed in mature form; sequence TII.

This sequence belongs to the 2H phosphoesterase superfamily. CNPase family. In terms of assembly, exists as monomers and homodimers.

The protein resides in the membrane. Its subcellular location is the melanosome. It carries out the reaction a nucleoside 2',3'-cyclic phosphate + H2O = a nucleoside 2'-phosphate + H(+). Functionally, catalyzes the formation of 2'-nucleotide products from 2',3'-cyclic substrates. May participate in RNA metabolism in the myelinating cell, CNP is the third most abundant protein in central nervous system myelin. This Mus musculus (Mouse) protein is 2',3'-cyclic-nucleotide 3'-phosphodiesterase.